The primary structure comprises 648 residues: Transmembrane 9 superfamily member 8 (648 aa).

The first 33 residues, 1 to 33 (MAMEFLRSSRRILESSGCAIALIFLLFIHGAHS), serve as a signal peptide directing secretion. The Lumenal portion of the chain corresponds to 34-285 (FYLPGVAPQD…YLLMSDNQIH (252 aa)). A helical transmembrane segment spans residues 286 to 306 (WFSIVNSLMIVLFLSGMVAMI). Over 307-355 (MLRTLYRDISRYNELETQEEAQEETGWKLVHGDVFRLPTNSDLLCVYVG) the chain is Cytoplasmic. The helical transmembrane segment at 356-376 (TGVQCLGMVFVTMIFAMLGFL) threads the bilayer. The Lumenal segment spans residues 377 to 381 (SPSNR). The helical transmembrane segment at 382 to 402 (GGLMTAMLLLWVFMGLFAGYA) threads the bilayer. At 403–422 (SSRLYKMFKGTEWKRIAFRT) the chain is on the cytoplasmic side. The helical transmembrane segment at 423 to 443 (AFLFPAVVSAIFFVLNALIWG) threads the bilayer. Residues 444–455 (QKSSGAVPFGTM) are Lumenal-facing. The helical transmembrane segment at 456-476 (FALIFLWFGISVPLVFVGGYI) threads the bilayer. At 477 to 506 (GFKKPAADDPVKTNKIPRQIPEQAWYMNPV) the chain is on the cytoplasmic side. Residues 507-527 (FSILIGGILPFGAVFIELFFI) form a helical membrane-spanning segment. Over 528-538 (LTSIWLNQFYY) the chain is Lumenal. The chain crosses the membrane as a helical span at residues 539-559 (IFGFLFLVFVILIVTCAEITV). The Cytoplasmic segment spans residues 560 to 577 (VLCYFQLCSEDYLWWWRS). Residues 578-598 (YLTSGSSALYLFLYATFYFFT) form a helical membrane-spanning segment. Residues 599–604 (KLQITK) are Lumenal-facing. Residues 605-625 (LVSAMLYFGYMLIASYAFFVL) form a helical membrane-spanning segment. Topologically, residues 626–648 (TGTIGFYACLWFTRLIYSSVKID) are cytoplasmic. An Endoplasmic reticulum export signal motif is present at residues 637 to 642 (FTRLIY). The Golgi retention signal motif lies at 646-648 (KID).

It belongs to the nonaspanin (TM9SF) (TC 9.A.2) family.

Its subcellular location is the endosome membrane. It localises to the golgi apparatus membrane. This chain is Transmembrane 9 superfamily member 8, found in Arabidopsis thaliana (Mouse-ear cress).